Reading from the N-terminus, the 179-residue chain is ATP synthase subunit delta (179 aa).

It belongs to the ATPase delta chain family. F-type ATPases have 2 components, F(1) - the catalytic core - and F(0) - the membrane proton channel. F(1) has five subunits: alpha(3), beta(3), gamma(1), delta(1), epsilon(1). F(0) has three main subunits: a(1), b(2) and c(10-14). The alpha and beta chains form an alternating ring which encloses part of the gamma chain. F(1) is attached to F(0) by a central stalk formed by the gamma and epsilon chains, while a peripheral stalk is formed by the delta and b chains.

The protein resides in the cell membrane. Functionally, f(1)F(0) ATP synthase produces ATP from ADP in the presence of a proton or sodium gradient. F-type ATPases consist of two structural domains, F(1) containing the extramembraneous catalytic core and F(0) containing the membrane proton channel, linked together by a central stalk and a peripheral stalk. During catalysis, ATP synthesis in the catalytic domain of F(1) is coupled via a rotary mechanism of the central stalk subunits to proton translocation. Its function is as follows. This protein is part of the stalk that links CF(0) to CF(1). It either transmits conformational changes from CF(0) to CF(1) or is implicated in proton conduction. This is ATP synthase subunit delta from Staphylococcus haemolyticus (strain JCSC1435).